The sequence spans 580 residues: tRNA-guanine(15) transglycosylase (580 aa).

Aspartate 91 functions as the Nucleophile in the catalytic mechanism. Residues aspartate 126 and alanine 192 each contribute to the substrate site. Zn(2+) contacts are provided by cysteine 275, cysteine 277, and cysteine 280. The region spanning 504 to 579 is the PUA domain; sequence RMRVVVDEDA…LAVKVRRGVE (76 aa).

Belongs to the archaeosine tRNA-ribosyltransferase family. The cofactor is Zn(2+).

It catalyses the reaction guanosine(15) in tRNA + 7-cyano-7-deazaguanine = 7-cyano-7-carbaguanosine(15) in tRNA + guanine. Its pathway is tRNA modification; archaeosine-tRNA biosynthesis. Functionally, exchanges the guanine residue with 7-cyano-7-deazaguanine (preQ0) at position 15 in the dihydrouridine loop (D-loop) of archaeal tRNAs. The polypeptide is tRNA-guanine(15) transglycosylase (Thermococcus onnurineus (strain NA1)).